The following is a 508-amino-acid chain: GMP synthase [glutamine-hydrolyzing] (508 aa).

The Glutamine amidotransferase type-1 domain maps to 1–189 (MILVLDFGSQ…ALLVCGCEKT (189 aa)). Cys-78 acts as the Nucleophile in catalysis. Residues His-163 and Glu-165 contribute to the active site. One can recognise a GMPS ATP-PPase domain in the interval 190-383 (WGMQHFAQRE…LGVSQDFLMR (194 aa)). 217-223 (SGGVDST) is an ATP binding site.

Homodimer.

It carries out the reaction XMP + L-glutamine + ATP + H2O = GMP + L-glutamate + AMP + diphosphate + 2 H(+). Its pathway is purine metabolism; GMP biosynthesis; GMP from XMP (L-Gln route): step 1/1. Functionally, catalyzes the synthesis of GMP from XMP. The protein is GMP synthase [glutamine-hydrolyzing] of Helicobacter pylori (strain P12).